The sequence spans 157 residues: MAYTVSSANQLVYLGSVWADPLELQNLCTSALGNQFQTQQARTTVQQQFSDVWKTIPTATVRFPATGFKRFRYNAVLDSLVSALLGAFDTRNRIIEVENPQNPTTAETLDATMRVDDATVAIRASISPIMNELVRGTGMYNQALFESASGLTWATTP.

An N-acetylalanine; by host modification is found at A2.

The protein belongs to the virgaviridae capsid protein family.

It is found in the virion. Its function is as follows. Capsid protein self-assembles to form rod-shaped virions about 18 nm in diameter with a central canal enclosing the viral genomic RNA. This is Capsid protein (CP) from Capsicum (peppers).